We begin with the raw amino-acid sequence, 516 residues long: NAD(P)H-quinone oxidoreductase chain 4, chloroplastic (516 aa).

14 helical membrane passes run 4–24 (FPWLTIIVVFPILTGSLIFLL), 37–57 (LCICILELLLTTYTFCYHFQL), 87–107 (IGPILLTGFITTLATLAAWPV), 111–131 (AQLFHFLMLAMYSGQIGSFSS), 134–154 (LLLFFLMWEFELIPVYLLLSM), 167–187 (FILYTAGGSIFLLIGVLGIGL), 208–228 (ALEVIFYVGFLIAFAVKLPII), 242–262 (HYSTCMLLAGILLKMGAYGLV), 272–292 (AHCLFSPGLIIVGAIQIIYAA), 305–325 (IAYSSISHMGFIIIGIGSLSD), 330–350 (GAILQIISHGFIGAALFFLAG), 386–406 (LALPGLSGFVAELLVFFGIIT), 416–436 (ILIAFLMAIGMILTPIYSLSM), and 462–482 (LFVSISLLLPIIGIGIYPDFV).

This sequence belongs to the complex I subunit 4 family.

It is found in the plastid. Its subcellular location is the chloroplast thylakoid membrane. It catalyses the reaction a plastoquinone + NADH + (n+1) H(+)(in) = a plastoquinol + NAD(+) + n H(+)(out). The enzyme catalyses a plastoquinone + NADPH + (n+1) H(+)(in) = a plastoquinol + NADP(+) + n H(+)(out). This is NAD(P)H-quinone oxidoreductase chain 4, chloroplastic from Oenothera argillicola (Appalachian evening primrose).